Here is a 140-residue protein sequence, read N- to C-terminus: Large ribosomal subunit protein uL16 (140 aa).

This sequence belongs to the universal ribosomal protein uL16 family. As to quaternary structure, part of the 50S ribosomal subunit.

Binds 23S rRNA and is also seen to make contacts with the A and possibly P site tRNAs. The protein is Large ribosomal subunit protein uL16 of Cytophaga hutchinsonii (strain ATCC 33406 / DSM 1761 / CIP 103989 / NBRC 15051 / NCIMB 9469 / D465).